The following is a 225-amino-acid chain: Non-structural protein V (225 aa).

A nuclear localization signal region spans residues 65–72 (PVKPRRKK). Residues 145–157 (SNEPVSSAGSAQD) show a composition bias toward polar residues. A disordered region spans residues 145 to 173 (SNEPVSSAGSAQDPNFKRGGANRERARGN). The Zn(2+) site is built by His-174, Cys-193, Cys-197, Cys-209, Cys-211, Cys-214, Cys-218, and Cys-221.

This sequence belongs to the paramyxoviruses V protein family. Interacts with host IFIH1/MDA5 and DHX58/LGP2. Forms with host DDB1, CUL4A, STAT1 and STAT2 the HPIV2 virus V-dependent complex (VDC); this complex targets host STAT2 to proteasomal degradation.

The protein localises to the host nucleus. Functionally, plays an essential role in the inhibition of host immune response. Prevents the establishment of cellular antiviral state by blocking interferon-alpha/beta (IFN-alpha/beta) production and signaling pathway. Interacts with host IFIH1/MDA5 and DHX58/LGP2 to inhibit the transduction pathway involved in the activation of IFN-beta promoter, thus protecting the virus against cell antiviral state. Efficiently blocks type I IFN signaling following infection by targeting host STAT2 for proteasomal degradation. Also plays a role in viral growth by promoting host RhoA-induced F-actin formation. In Homo sapiens (Human), this protein is Non-structural protein V (P/V).